We begin with the raw amino-acid sequence, 222 residues long: GEM-like protein 4 (222 aa).

Residues 95-173 (KIFKRLFRVS…CKIDRVNQSQ (79 aa)) form the GRAM domain.

Belongs to the GEM family.

This chain is GEM-like protein 4, found in Arabidopsis thaliana (Mouse-ear cress).